The sequence spans 499 residues: MGRWGRQSPVLEPPDPQMQTTPPPPTLPPRTFMRQSSITKIGNMLNTAININGAKKPASNGEASWCFSQIKGALDDDVTDADIISCVEFNHDGELLATGDKGGRVVIFQRDPASKAANPRRGEYNVYSTFQSHEPEFDYLKSLEIEEKINKIRWLQQKNPVHFLLSTNDKTVKLWKVSERDKSFGGYNTKEENGLIRDPQNVTALRVPSVKQIPLLVEASPRRTFANAHTYHINSISVNSDQETFLSADDLRINLWHLEVVNQSYNIVDIKPTNMEELTEVITAAEFHPTECNVFVYSSSKGTIRLCDMRSAALCDRHSKQFEEPENPTNRSFFSEIISSISDVKLSNSGRYMISRDYLSIKVWDLHMETKPIETYPVHEYLRAKLCSLYENDCIFDKFECCWNGKDSSIMTGSYNNFFRVFDRNSKKDVTLEASRDIIKPKTVLKPRKVCTGGKRKKDEISVDCLDFNKKILHTAWHPEENIIAVAATNNLFIFQDKF.

A disordered region spans residues 1–30 (MGRWGRQSPVLEPPDPQMQTTPPPPTLPPR). Over residues 11 to 28 (LEPPDPQMQTTPPPPTLP) the composition is skewed to pro residues. 7 WD repeats span residues 79 to 118 (TDAD…KAAN), 144 to 185 (EIEE…KSFG), 228 to 266 (AHTY…QSYN), 277 to 317 (ELTE…LCDR), 336 to 374 (EIIS…KPIE), 391 to 432 (ENDC…DVTL), and 467 to 498 (DFNK…FQDK).

The protein belongs to the phosphatase 2A regulatory subunit B family. PP2A exists in several trimeric forms, all of which consist of a core composed of a catalytic subunit associated with a 65 kDa regulatory subunit (PR65) (subunit A). The core complex associates with a third, variable subunit (subunit B), which confers distinct properties to the holoenzyme.

Its function is as follows. Could perform a substrate recognition function or could be responsible for targeting the enzyme complex to the appropriate subcellular compartment. The sequence is that of Protein phosphatase PP2A 55 kDa regulatory subunit (tws) from Drosophila melanogaster (Fruit fly).